The following is a 233-amino-acid chain: Small ribosomal subunit protein uS2 (233 aa).

The protein belongs to the universal ribosomal protein uS2 family.

In Clostridium perfringens (strain ATCC 13124 / DSM 756 / JCM 1290 / NCIMB 6125 / NCTC 8237 / Type A), this protein is Small ribosomal subunit protein uS2.